A 611-amino-acid chain; its full sequence is TANK-binding kinase 1-binding protein 1 (611 aa).

The interval 1–280 is homodimerization; it reads MESMFEDDIS…QDLASNQSEC (280 aa). Residues 48–162 are a coiled coil; that stretch reads YGDIKERLGG…ALVETHLRQI (115 aa). A Phosphoserine modification is found at S184. Residues 218–277 are a coiled coil; that stretch reads TSVSVSELERRRLEEALEAAQGEARGAQLREEQLQAECERLQGELKQLQETRAQDLASNQ. The tract at residues 281–330 is interaction with TBK1 and IKBKE; that stretch reads DMAWVKRVGDDQVNLALAYTELTEELGRLRELSSLQGRILRTLLQEQARN. Residues 328 to 437 form a disordered region; the sequence is ARNAGQRHSP…PPPPPGERTL (110 aa). Pro residues predominate over residues 346–361; sequence PACPSPSPPARPPPCA. Residues 362–372 show a composition bias toward low complexity; that stretch reads PCQSPAAQRRS. A phosphoserine mark is found at S365, S372, S379, S385, S400, and S415. Residues 389–406 show a composition bias toward pro residues; that stretch reads PSCPSPVPQRRSPVPPSC. Residues 416-433 are compositionally biased toward pro residues; that stretch reads PVPPSCPAPQPRPPPPPG. Residues S500 and S530 each carry the phosphoserine modification. The segment at 579-605 adopts a UBZ1-type zinc-finger fold; that stretch reads IRSCPLCQLGFPVGYPDDALIKHIDSH. Zn(2+)-binding residues include C582, C585, H601, and H605.

In terms of assembly, homodimer. May form a heterodimer with NAP1. Interacts with TKB1 and IKBKE. Weakly interacts with DDX3X.

Adapter protein which constitutively binds TBK1 and IKBKE playing a role in antiviral innate immunity. Essential for the efficient induction of IRF-dependent transcription following infection with Sendai virus. The chain is TANK-binding kinase 1-binding protein 1 from Mus musculus (Mouse).